We begin with the raw amino-acid sequence, 273 residues long: Dermonecrotic toxin LhSicTox-alphaIA2bii (273 aa).

Histidine 5 is a catalytic residue. Residues glutamate 25 and aspartate 27 each contribute to the Mg(2+) site. Histidine 41 (nucleophile) is an active-site residue. Intrachain disulfides connect cysteine 45/cysteine 51 and cysteine 47/cysteine 190. Aspartate 85 lines the Mg(2+) pocket.

It belongs to the arthropod phospholipase D family. Class II subfamily. The cofactor is Mg(2+). Expressed by the venom gland.

Its subcellular location is the secreted. The catalysed reaction is an N-(acyl)-sphingosylphosphocholine = an N-(acyl)-sphingosyl-1,3-cyclic phosphate + choline. The enzyme catalyses an N-(acyl)-sphingosylphosphoethanolamine = an N-(acyl)-sphingosyl-1,3-cyclic phosphate + ethanolamine. It carries out the reaction a 1-acyl-sn-glycero-3-phosphocholine = a 1-acyl-sn-glycero-2,3-cyclic phosphate + choline. It catalyses the reaction a 1-acyl-sn-glycero-3-phosphoethanolamine = a 1-acyl-sn-glycero-2,3-cyclic phosphate + ethanolamine. Functionally, dermonecrotic toxins cleave the phosphodiester linkage between the phosphate and headgroup of certain phospholipids (sphingolipid and lysolipid substrates), forming an alcohol (often choline) and a cyclic phosphate. This toxin acts on sphingomyelin (SM). It may also act on ceramide phosphoethanolamine (CPE), lysophosphatidylcholine (LPC) and lysophosphatidylethanolamine (LPE), but not on lysophosphatidylserine (LPS), and lysophosphatidylglycerol (LPG). It acts by transphosphatidylation, releasing exclusively cyclic phosphate products as second products. Induces dermonecrosis, hemolysis, increased vascular permeability, edema, inflammatory response, and platelet aggregation. This is Dermonecrotic toxin LhSicTox-alphaIA2bii from Loxosceles hirsuta (Recluse spider).